The following is a 256-amino-acid chain: Probable S-methyl-5'-thioinosine phosphorylase (256 aa).

Phosphate is bound by residues T10 and 47–48; that span reads RH. M178 provides a ligand contact to substrate. T179 contributes to the phosphate binding site. Position 202–204 (202–204) interacts with substrate; sequence NYA.

It belongs to the PNP/MTAP phosphorylase family. MTAP subfamily. Homotrimer.

It catalyses the reaction S-methyl-5'-thioinosine + phosphate = 5-(methylsulfanyl)-alpha-D-ribose 1-phosphate + hypoxanthine. It functions in the pathway purine metabolism; purine nucleoside salvage. Catalyzes the reversible phosphorylation of S-methyl-5'-thioinosine (MTI) to hypoxanthine and 5-methylthioribose-1-phosphate. Involved in the breakdown of S-methyl-5'-thioadenosine (MTA), a major by-product of polyamine biosynthesis. Catabolism of (MTA) occurs via deamination to MTI and phosphorolysis to hypoxanthine. The polypeptide is Probable S-methyl-5'-thioinosine phosphorylase (Methanopyrus kandleri (strain AV19 / DSM 6324 / JCM 9639 / NBRC 100938)).